Reading from the N-terminus, the 252-residue chain is Chitooligosaccharide deacetylase (252 aa).

Mg(2+) contacts are provided by H61 and H125.

The protein belongs to the YdjC deacetylase family. ChbG subfamily. In terms of assembly, homodimer. Mg(2+) is required as a cofactor.

It is found in the cytoplasm. The enzyme catalyses N,N'-diacetylchitobiose + H2O = N-acetyl-beta-D-glucosaminyl-(1-&gt;4)-D-glucosamine + acetate. The catalysed reaction is diacetylchitobiose-6'-phosphate + H2O = N'-monoacetylchitobiose-6'-phosphate + acetate. Its pathway is glycan degradation; chitin degradation. Involved in the degradation of chitin. ChbG is essential for growth on the acetylated chitooligosaccharides chitobiose and chitotriose but is dispensable for growth on cellobiose and chitosan dimer, the deacetylated form of chitobiose. Deacetylation of chitobiose-6-P and chitotriose-6-P is necessary for both the activation of the chb promoter by the regulatory protein ChbR and the hydrolysis of phosphorylated beta-glucosides by the phospho-beta-glucosidase ChbF. Catalyzes the removal of only one acetyl group from chitobiose-6-P to yield monoacetylchitobiose-6-P, the inducer of ChbR and the substrate of ChbF. In Salmonella typhimurium (strain LT2 / SGSC1412 / ATCC 700720), this protein is Chitooligosaccharide deacetylase.